Consider the following 639-residue polypeptide: Transcription factor phomR (639 aa).

The zn(2)-C6 fungal-type DNA-binding region spans 14-41 (CWTCRLRRKKCNEGGPPCDNCEARGIHC). Disordered stretches follow at residues 58–136 (REEA…AGTG) and 476–499 (LPRSPEKTSSASGKPSHGRKTGPE). Over residues 68–108 (SGRGRSYSRSSSTAAAAAPKPAEGAMVTGGSSSSSRGSGSS) the composition is skewed to low complexity.

It localises to the nucleus. Transcription factor; part of the gene cluster that mediates the biosynthesis of the phomopsins, a group of hexapeptide mycotoxins which infects lupins and causes lupinosis disease in livestock. May play a role in the regulation of the production of phomopsins. This chain is Transcription factor phomR, found in Diaporthe leptostromiformis (Lupinosis disease fungus).